The sequence spans 232 residues: BTB/POZ domain-containing protein KCTD11 (232 aa).

Residues Met-1–Arg-49 form the BTB domain.

In terms of assembly, homopentamer. Interacts with KCTD6 and KCTD21; KCTD11 and KCTD6 or KCTD21 may associate in pentameric assemblies. Component of the BCR(KCTD11) E3 ubiquitin ligase complex, at least composed of CUL3 and KCTD11 and RBX1. Interacts (via BTB domain) with CUL3; initially a 4:4 stoichiometry has been reported, however, electron microscopy revealed pentameric states of the BTB domain. As to expression, weakly expressed in lung. In the cerebellum, higher expression in non proliferating external granule cells layer than in highly proliferating ones.

The protein operates within protein modification; protein ubiquitination. Functionally, plays a role as a marker and a regulator of neuronal differentiation; Up-regulated by a variety of neurogenic signals, such as retinoic acid, epidermal growth factor/EGF and NGFB/nerve growth factor. Induces apoptosis, growth arrest and the expression of cyclin-dependent kinase inhibitor CDKN1B. Plays a role as a tumor repressor and inhibits cell growth and tumorigenicity of medulloblastoma (MDB). Acts as a probable substrate-specific adapter for a BCR (BTB-CUL3-RBX1) E3 ubiquitin-protein ligase complex towards HDAC1. Functions as antagonist of the Hedgehog pathway on cell proliferation and differentiation by affecting the nuclear transfer of transcription factor GLI1, thus maintaining cerebellar granule cells in undifferentiated state, this effect probably occurs via HDAC1 down-regulation, keeping GLI1 acetylated and inactive. When knock-down, Hedgehog antagonism is impaired and proliferation of granule cells is sustained. Activates the caspase cascade. The protein is BTB/POZ domain-containing protein KCTD11 (Kctd11) of Mus musculus (Mouse).